Reading from the N-terminus, the 317-residue chain is Putative cuticle collagen 80 (317 aa).

The interval 80–262 (CNCGPQASNC…GAPGNDGAPG (183 aa)) is disordered. Triple-helical region stretches follow at residues 92–124 (GPPG…AGPA), 137–199 (GAPG…SGQR), and 202–264 (GLPG…PGSD). Low complexity-rich tracts occupy residues 108-124 (QPGP…AGPA), 135-145 (PQGAPGPAGAP), and 175-206 (AGDA…LPGP). 2 stretches are compositionally biased toward pro residues: residues 207–219 (SGRP…PGAP) and 230–240 (PAGPPGPPGPN). Residues 242–262 (QPGHPGQDGQPGAPGNDGAPG) show a composition bias toward low complexity.

It belongs to the cuticular collagen family. In terms of assembly, collagen polypeptide chains are complexed within the cuticle by disulfide bonds and other types of covalent cross-links.

Nematode cuticles are composed largely of collagen-like proteins. The cuticle functions both as an exoskeleton and as a barrier to protect the worm from its environment. The protein is Putative cuticle collagen 80 (col-80) of Caenorhabditis elegans.